A 466-amino-acid chain; its full sequence is MSVVPVADVLQGRVAVDQEVTVRGWVRTRRDSKAGISFLAVYDGSCFDPVQAVINNSLPNYNEEVLHLTTGCSVVVTGKVVASPGQGQSFEIQATKVEVAGWVEDPDTYPMAAKRHSIEYLREVAHLRPRTNLIGAVARVRHTLAQALHRFFDEQGFFWVSTPLITASDTEGAGEMFRVSTLDLENLPRNDQGRVDFDKDFFGKESFLTVSGQLNGETYACALSKIYTFGPTFRAENSNTSRHLAEFWMLEPEVAFADLEDNARLAEAMLKYVFNAVLEERADDMKFFAERVDKDAIARLERFVSTDFAQVDYTEAVAILERCGKTFENPVFWGVDLSSEHERYLAEEHFKAPVVVKNYPKEIKAFYMRLNEDGKTVAAMDVLAPGIGEIIGGSQREERLDVLDARMAEMGLNKEDYWWYRDLRRYGTVPHSGFGLGFERLIAYVTGVQNVRDVIPFPRTPRNASF.

It belongs to the class-II aminoacyl-tRNA synthetase family. Homodimer.

It is found in the cytoplasm. It catalyses the reaction tRNA(Asn) + L-asparagine + ATP = L-asparaginyl-tRNA(Asn) + AMP + diphosphate + H(+). This is Asparagine--tRNA ligase from Salmonella choleraesuis (strain SC-B67).